A 432-amino-acid polypeptide reads, in one-letter code: Argininosuccinate lyase (432 aa).

This sequence belongs to the lyase 1 family. Argininosuccinate lyase subfamily.

It localises to the cytoplasm. The enzyme catalyses 2-(N(omega)-L-arginino)succinate = fumarate + L-arginine. Its pathway is amino-acid biosynthesis; L-arginine biosynthesis; L-arginine from L-ornithine and carbamoyl phosphate: step 3/3. The chain is Argininosuccinate lyase from Xanthomonas euvesicatoria pv. vesicatoria (strain 85-10) (Xanthomonas campestris pv. vesicatoria).